The chain runs to 432 residues: Adenylosuccinate synthetase (432 aa).

Residues 13 to 19 (GDEGKGK) and 41 to 43 (GHT) each bind GTP. Catalysis depends on Asp14, which acts as the Proton acceptor. 2 residues coordinate Mg(2+): Asp14 and Gly41. IMP-binding positions include 14 to 17 (DEGK), 39 to 42 (NAGH), Thr130, Arg144, Gln225, Thr240, and Arg304. His42 serves as the catalytic Proton donor. 300 to 306 (ATTGRRR) provides a ligand contact to substrate. GTP-binding positions include Arg306, 332–334 (KLD), and 415–417 (STG).

Belongs to the adenylosuccinate synthetase family. In terms of assembly, homodimer. Mg(2+) serves as cofactor.

The protein resides in the cytoplasm. It carries out the reaction IMP + L-aspartate + GTP = N(6)-(1,2-dicarboxyethyl)-AMP + GDP + phosphate + 2 H(+). The protein operates within purine metabolism; AMP biosynthesis via de novo pathway; AMP from IMP: step 1/2. Plays an important role in the de novo pathway of purine nucleotide biosynthesis. Catalyzes the first committed step in the biosynthesis of AMP from IMP. The sequence is that of Adenylosuccinate synthetase from Cronobacter sakazakii (strain ATCC BAA-894) (Enterobacter sakazakii).